A 970-amino-acid polypeptide reads, in one-letter code: Toxin subunit YenC2 (970 aa).

9 RHS repeats span residues 168-182 (AGQC…GLIQ), 297-311 (GVVT…TQRL), 329-343 (LQDL…GNVL), 361-375 (VPEN…YQLV), 408-422 (NYTR…GNLM), 500-514 (DDSE…SQRI), 580-594 (NDQI…TCSS), 606-620 (SMEE…AVWA), and 640-654 (DATG…YYQP). The segment at 610–690 (YYPYGGTAVW…PLRLTDPDGM (81 aa)) is RHS-repeat associated core domain. The interval 849 to 950 (TEAFITGIRS…YNCSGIISGL (102 aa)) is deaminase domain.

This sequence belongs to the RHS family. As to quaternary structure, semipurified toxin complex consists of at least YenA1-YenA2-YenB-YenC1-YenC2-Chi1-Chi2. YenB and the N-terminus of YenC2 form a large hollow shell of beta-strands. The shell is closed at both ends, within which the C-terminus of YenC2 is probably found. The C-terminal region dissociates from the YenB-YenC2 complex at pH 4.5 but not 7.5. The Yen-TC:K9 subcomplex is about 26 nm tall and 22 nm in diameter with 5-fold symmetry and 5 copies of YenA1, YenA2, Chi1 and Chi2; the chitinase subunits may be solvent accessible on the exterior the complex. The Yen-TC:K9 subcomplex has no insecticidal activity. The native complex with additional YenB, YenC1 and YenC2 subunits is 16 nm taller and is insecticidal; the toxicity-conferring subunits are present at about 1 copy each.

The protein resides in the secreted. Toxin complex is secreted when grown at 25 degrees Celsius or less; at higher temperatures the proteins are present intracellularly but not secreted. Its function is as follows. Part of an orally active toxin complex (TC) with strong insecticidal effects on larvae of the Coleoptera Costelytra zealandica, Acrossidius tasmania and Adoryphorus couloni and some Lepidoptera larvae. The TC has an endochitinase activity. This Yersinia entomophaga protein is Toxin subunit YenC2.